A 258-amino-acid polypeptide reads, in one-letter code: Acyl-[acyl-carrier-protein]--UDP-N-acetylglucosamine O-acyltransferase (258 aa).

The protein belongs to the transferase hexapeptide repeat family. LpxA subfamily. Homotrimer.

The protein localises to the cytoplasm. It catalyses the reaction a (3R)-hydroxyacyl-[ACP] + UDP-N-acetyl-alpha-D-glucosamine = a UDP-3-O-[(3R)-3-hydroxyacyl]-N-acetyl-alpha-D-glucosamine + holo-[ACP]. The protein operates within glycolipid biosynthesis; lipid IV(A) biosynthesis; lipid IV(A) from (3R)-3-hydroxytetradecanoyl-[acyl-carrier-protein] and UDP-N-acetyl-alpha-D-glucosamine: step 1/6. Its function is as follows. Involved in the biosynthesis of lipid A, a phosphorylated glycolipid that anchors the lipopolysaccharide to the outer membrane of the cell. The chain is Acyl-[acyl-carrier-protein]--UDP-N-acetylglucosamine O-acyltransferase from Pseudomonas aeruginosa (strain LESB58).